The primary structure comprises 340 residues: Dihydroorotate dehydrogenase (quinone) (340 aa).

FMN contacts are provided by residues 62–66 and T86; that span reads AGMDK. K66 is a binding site for substrate. 111-115 is a binding site for substrate; that stretch reads NRMGF. 2 residues coordinate FMN: N139 and N172. N172 is a substrate binding site. S175 (nucleophile) is an active-site residue. N177 contacts substrate. The FMN site is built by K217 and T245. Position 246-247 (246-247) interacts with substrate; that stretch reads NT. FMN is bound by residues G268, G297, and 318 to 319; that span reads YS.

This sequence belongs to the dihydroorotate dehydrogenase family. Type 2 subfamily. Monomer. Requires FMN as cofactor.

It localises to the cell membrane. It catalyses the reaction (S)-dihydroorotate + a quinone = orotate + a quinol. It participates in pyrimidine metabolism; UMP biosynthesis via de novo pathway; orotate from (S)-dihydroorotate (quinone route): step 1/1. Catalyzes the conversion of dihydroorotate to orotate with quinone as electron acceptor. In Shewanella woodyi (strain ATCC 51908 / MS32), this protein is Dihydroorotate dehydrogenase (quinone).